A 245-amino-acid chain; its full sequence is 3-deoxy-manno-octulosonate cytidylyltransferase (245 aa).

It belongs to the KdsB family.

Its subcellular location is the cytoplasm. It carries out the reaction 3-deoxy-alpha-D-manno-oct-2-ulosonate + CTP = CMP-3-deoxy-beta-D-manno-octulosonate + diphosphate. It participates in nucleotide-sugar biosynthesis; CMP-3-deoxy-D-manno-octulosonate biosynthesis; CMP-3-deoxy-D-manno-octulosonate from 3-deoxy-D-manno-octulosonate and CTP: step 1/1. It functions in the pathway bacterial outer membrane biogenesis; lipopolysaccharide biosynthesis. Activates KDO (a required 8-carbon sugar) for incorporation into bacterial lipopolysaccharide in Gram-negative bacteria. In Rhodopseudomonas palustris (strain HaA2), this protein is 3-deoxy-manno-octulosonate cytidylyltransferase.